A 281-amino-acid polypeptide reads, in one-letter code: Formamidopyrimidine-DNA glycosylase (281 aa).

The active-site Schiff-base intermediate with DNA is proline 2. Glutamate 3 acts as the Proton donor in catalysis. Catalysis depends on lysine 58, which acts as the Proton donor; for beta-elimination activity. 3 residues coordinate DNA: histidine 94, arginine 113, and arginine 156. Residues 241–281 form an FPG-type; degenerate zinc finger; the sequence is AVYDRVGQPCPGCDCDVARTGGIERMVQSGRSTFFCGRRQR. Arginine 271 acts as the Proton donor; for delta-elimination activity in catalysis.

Belongs to the FPG family. Monomer. Zn(2+) is required as a cofactor.

The catalysed reaction is Hydrolysis of DNA containing ring-opened 7-methylguanine residues, releasing 2,6-diamino-4-hydroxy-5-(N-methyl)formamidopyrimidine.. It catalyses the reaction 2'-deoxyribonucleotide-(2'-deoxyribose 5'-phosphate)-2'-deoxyribonucleotide-DNA = a 3'-end 2'-deoxyribonucleotide-(2,3-dehydro-2,3-deoxyribose 5'-phosphate)-DNA + a 5'-end 5'-phospho-2'-deoxyribonucleoside-DNA + H(+). In terms of biological role, involved in base excision repair of DNA damaged by oxidation or by mutagenic agents. Acts as a DNA glycosylase that recognizes and removes damaged bases. Has a preference for oxidized purines, such as 7,8-dihydro-8-oxoguanine (8-oxoG). Has AP (apurinic/apyrimidinic) lyase activity and introduces nicks in the DNA strand. Cleaves the DNA backbone by beta-delta elimination to generate a single-strand break at the site of the removed base with both 3'- and 5'-phosphates. This Rhodospirillum rubrum (strain ATCC 11170 / ATH 1.1.1 / DSM 467 / LMG 4362 / NCIMB 8255 / S1) protein is Formamidopyrimidine-DNA glycosylase.